The sequence spans 151 residues: Arginine regulator (151 aa).

This sequence belongs to the ArgR family.

The protein localises to the cytoplasm. It participates in amino-acid degradation; L-arginine degradation via ADI pathway. In terms of biological role, regulates the transcription of the arc operon, involved in arginine catabolism. The polypeptide is Arginine regulator (argR1) (Clostridium perfringens (strain 13 / Type A)).